The sequence spans 1535 residues: ABC multidrug transporter atrF (1535 aa).

Residues 1 to 115 form a disordered region; that stretch reads MADDHRQPEA…DEQASSTDEY (115 aa). Asn33 is a glycosylation site (N-linked (GlcNAc...) asparagine). Residues 34 to 45 show a composition bias toward low complexity; sequence TTSTSETDASAD. Over residues 46–76 the composition is skewed to basic and acidic residues; the sequence is ADARWGERNQGDPVSRRGAMEEFEEMRREVT. Over residues 79 to 93 the composition is skewed to basic residues; the sequence is SLHRTRSAKDARRRS. N-linked (GlcNAc...) asparagine glycans are attached at residues Asn149, Asn274, Asn287, and Asn351. The region spanning 185–427 is the ABC transporter 1 domain; it reads VPALHFGKRP…FVDLGFYCPE (243 aa). 7 helical membrane-spanning segments follow: residues 540 to 560, 573 to 593, 618 to 638, 646 to 666, 680 to 700, 703 to 723, and 791 to 811; these read LYTK…LFYG, GALF…MPAV, VVVD…IVYF, ASKF…ITSL, AVRF…YVIP, GLID…LSYS, and FGVV…AAEV. The interval 834–868 is disordered; that stretch reads KAQNGKGNDEEQVQNTGDNAALSRGEAKSSSSGEA. The ABC transporter 2 domain maps to 879-1117; sequence FTWSNVEYTV…DVIKYFADRG (239 aa). Asn892 is a glycosylation site (N-linked (GlcNAc...) asparagine). 915 to 922 lines the ATP pocket; that stretch reads GASGAGKT. The next 6 helical transmembrane spans lie at 1212 to 1232, 1246 to 1266, 1295 to 1315, 1320 to 1340, 1342 to 1362, and 1384 to 1406; these read YGKL…FWML, IFLI…KFYI, IPMA…PVGF, SSAG…ASWG, WICA…FFFV, and WMYY…FPSV. N-linked (GlcNAc...) asparagine glycosylation occurs at Asn1459. The next 2 membrane-spanning stretches (helical) occupy residues 1477 to 1497 and 1503 to 1523; these read CFGI…FFIY and GWSF…EGVK.

The protein belongs to the ABC transporter superfamily. ABCG family. PDR (TC 3.A.1.205) subfamily.

It is found in the cell membrane. The enzyme catalyses voriconazole(in) + ATP + H2O = voriconazole(out) + ADP + phosphate + H(+). Its function is as follows. Pleiotropic ABC efflux transporter involved in the basal level of azole susceptibility. Confers resistance to voriconazole. The polypeptide is ABC multidrug transporter atrF (Aspergillus flavus (strain ATCC 200026 / FGSC A1120 / IAM 13836 / NRRL 3357 / JCM 12722 / SRRC 167)).